Reading from the N-terminus, the 143-residue chain is Putative glycerol transporter Lin0368 (143 aa).

4 helical membrane passes run 6 to 26 (GMIG…PLAE), 27 to 47 (NYGI…MWFM), 60 to 80 (AAFV…DVFM), and 90 to 110 (LPTI…AAAI). The segment at 118–143 (HEAKQEKTEPGMNIKEEERLNENQLV) is disordered.

The protein localises to the membrane. Its function is as follows. Could be involved in the glycerol uptake either via facilitated diffusion or active transport. This is Putative glycerol transporter Lin0368 from Listeria innocua serovar 6a (strain ATCC BAA-680 / CLIP 11262).